A 296-amino-acid chain; its full sequence is Ribose import binding protein RbsB (296 aa).

Positions 1 to 25 (MNMKKLATLVSAVALSATVSANAMA) are cleaved as a signal peptide.

The protein belongs to the bacterial solute-binding protein 2 family. As to quaternary structure, the complex is composed of an ATP-binding protein (RbsA), two transmembrane proteins (RbsC) and a solute-binding protein (RbsB).

Its subcellular location is the periplasm. Its function is as follows. Part of the ABC transporter complex RbsABC involved in ribose import. Binds ribose. Also serves as the primary chemoreceptor for chemotaxis. The polypeptide is Ribose import binding protein RbsB (Escherichia coli (strain K12)).